The sequence spans 301 residues: Uricase-2 isozyme 2 (301 aa).

Catalysis depends on charge relay system residues K17 and T63. 7 residues coordinate urate: T63, D64, F165, R182, V237, Q238, and N257. Residue H259 is the Charge relay system of the active site. Positions 299–301 (SKL) match the Microbody targeting signal motif.

It belongs to the uricase family.

The protein resides in the peroxisome. The enzyme catalyses urate + O2 + H2O = 5-hydroxyisourate + H2O2. It functions in the pathway purine metabolism; urate degradation; (S)-allantoin from urate: step 1/3. In terms of biological role, catalyzes the oxidation of uric acid to 5-hydroxyisourate, which is further processed to form (S)-allantoin. This chain is Uricase-2 isozyme 2, found in Canavalia lineata (Beach bean).